Here is a 445-residue protein sequence, read N- to C-terminus: 3-phosphoshikimate 1-carboxyvinyltransferase (445 aa).

3-phosphoshikimate-binding residues include Lys-21, Ser-22, and Arg-26. Residue Lys-21 participates in phosphoenolpyruvate binding. Residues Gly-92 and Arg-120 each contribute to the phosphoenolpyruvate site. The 3-phosphoshikimate site is built by Ser-165, Gln-166, Asp-307, and Lys-334. Gln-166 is a binding site for phosphoenolpyruvate. The Proton acceptor role is filled by Asp-307. 3 residues coordinate phosphoenolpyruvate: Arg-338, Arg-379, and Lys-405.

The protein belongs to the EPSP synthase family. As to quaternary structure, monomer.

It localises to the cytoplasm. The enzyme catalyses 3-phosphoshikimate + phosphoenolpyruvate = 5-O-(1-carboxyvinyl)-3-phosphoshikimate + phosphate. It participates in metabolic intermediate biosynthesis; chorismate biosynthesis; chorismate from D-erythrose 4-phosphate and phosphoenolpyruvate: step 6/7. Its function is as follows. Catalyzes the transfer of the enolpyruvyl moiety of phosphoenolpyruvate (PEP) to the 5-hydroxyl of shikimate-3-phosphate (S3P) to produce enolpyruvyl shikimate-3-phosphate and inorganic phosphate. The polypeptide is 3-phosphoshikimate 1-carboxyvinyltransferase (Chlamydia abortus (strain DSM 27085 / S26/3) (Chlamydophila abortus)).